The sequence spans 118 residues: Non-specific lipid-transfer protein A (118 aa).

The N-terminal stretch at 1–25 (MAGVMKLACLVLACMIVAGPITANR) is a signal peptide. 4 disulfide bridges follow: C29–C76, C39–C53, C54–C100, and C74–C114.

Belongs to the plant LTP family.

Functionally, plant non-specific lipid-transfer proteins transfer phospholipids as well as galactolipids across membranes. May play a role in wax or cutin deposition in the cell walls of expanding epidermal cells and certain secretory tissues. The chain is Non-specific lipid-transfer protein A (WAX9A) from Brassica oleracea var. italica (Broccoli).